Here is a 485-residue protein sequence, read N- to C-terminus: ATP-dependent protease ATPase subunit HslU (485 aa).

ATP contacts are provided by residues Ile-22 and Gly-64–Glu-69. The disordered stretch occupies residues Lys-146–Met-189. Positions Ala-149 to Gln-177 are enriched in polar residues. The span at Ala-178 to Met-189 shows a compositional bias: basic and acidic residues. ATP is bound by residues Asp-297, Glu-363, and Arg-435.

It belongs to the ClpX chaperone family. HslU subfamily. As to quaternary structure, a double ring-shaped homohexamer of HslV is capped on each side by a ring-shaped HslU homohexamer. The assembly of the HslU/HslV complex is dependent on binding of ATP.

The protein resides in the cytoplasm. In terms of biological role, ATPase subunit of a proteasome-like degradation complex; this subunit has chaperone activity. The binding of ATP and its subsequent hydrolysis by HslU are essential for unfolding of protein substrates subsequently hydrolyzed by HslV. HslU recognizes the N-terminal part of its protein substrates and unfolds these before they are guided to HslV for hydrolysis. This is ATP-dependent protease ATPase subunit HslU from Treponema denticola (strain ATCC 35405 / DSM 14222 / CIP 103919 / JCM 8153 / KCTC 15104).